The sequence spans 513 residues: Pantetheinase (513 aa).

An N-terminal signal peptide occupies residues 1–22 (MITSPLLAYVAILFFCVLKASS). One can recognise a CN hydrolase domain in the interval 40 to 307 (APLTPVSHEE…GKLLLSQLDS (268 aa)). Residue Glu80 is the Proton acceptor of the active site. N-linked (GlcNAc...) asparagine glycosylation is present at Asn147. Lys179 serves as the catalytic Proton donor. The Nucleophile role is filled by Cys212. 2 N-linked (GlcNAc...) asparagine glycosylation sites follow: Asn315 and Asn353. Gly487 carries GPI-anchor amidated glycine lipidation. The propeptide at 488–513 (ASADLVAQGLRVMLGVIITIMYSLSW) is removed in mature form.

Belongs to the carbon-nitrogen hydrolase superfamily. BTD/VNN family. As to quaternary structure, monomer. As to expression, detected in kidney (at protein level).

The protein localises to the cell membrane. It carries out the reaction (R)-pantetheine + H2O = cysteamine + (R)-pantothenate. In terms of biological role, amidohydrolase that hydrolyzes specifically one of the carboamide linkages in D-pantetheine thus recycling pantothenic acid (vitamin B5) and releasing cysteamine. This chain is Pantetheinase (VNN1), found in Sus scrofa (Pig).